The following is a 177-amino-acid chain: Large ribosomal subunit protein uL6 (177 aa).

This sequence belongs to the universal ribosomal protein uL6 family. As to quaternary structure, part of the 50S ribosomal subunit.

Functionally, this protein binds to the 23S rRNA, and is important in its secondary structure. It is located near the subunit interface in the base of the L7/L12 stalk, and near the tRNA binding site of the peptidyltransferase center. This Pseudomonas paraeruginosa (strain DSM 24068 / PA7) (Pseudomonas aeruginosa (strain PA7)) protein is Large ribosomal subunit protein uL6.